A 275-amino-acid polypeptide reads, in one-letter code: 4-hydroxy-tetrahydrodipicolinate reductase (275 aa).

Residues 13 to 18 (GAAGKM) and 108 to 110 (GTT) each bind NAD(+). H164 functions as the Proton donor/acceptor in the catalytic mechanism. H165 lines the (S)-2,3,4,5-tetrahydrodipicolinate pocket. K168 acts as the Proton donor in catalysis. Residue 174-175 (GT) participates in (S)-2,3,4,5-tetrahydrodipicolinate binding.

Belongs to the DapB family.

The protein localises to the cytoplasm. It catalyses the reaction (S)-2,3,4,5-tetrahydrodipicolinate + NAD(+) + H2O = (2S,4S)-4-hydroxy-2,3,4,5-tetrahydrodipicolinate + NADH + H(+). It carries out the reaction (S)-2,3,4,5-tetrahydrodipicolinate + NADP(+) + H2O = (2S,4S)-4-hydroxy-2,3,4,5-tetrahydrodipicolinate + NADPH + H(+). The protein operates within amino-acid biosynthesis; L-lysine biosynthesis via DAP pathway; (S)-tetrahydrodipicolinate from L-aspartate: step 4/4. In terms of biological role, catalyzes the conversion of 4-hydroxy-tetrahydrodipicolinate (HTPA) to tetrahydrodipicolinate. The polypeptide is 4-hydroxy-tetrahydrodipicolinate reductase (Cyanothece sp. (strain PCC 7425 / ATCC 29141)).